Reading from the N-terminus, the 1067-residue chain is FHIP family protein GL19323 (1067 aa).

The span at 1-11 (MSWLRSSPLRQ) shows a compositional bias: polar residues. Disordered regions lie at residues 1–31 (MSWL…GSLR), 503–525 (LARP…QPIQ), and 832–1013 (NENS…SEPA). Phosphoserine occurs at positions 508 and 835. Positions 842-858 (QPQTTLSQQQQQQQGQQ) are enriched in low complexity. Residues 859–878 (RSAYATLSAATPVQATQTSA) are compositionally biased toward polar residues. The span at 893–904 (SKSISSMFSRRS) shows a compositional bias: low complexity. The span at 918–949 (LVGNNNSGSGQSQPFSSTGTGTCETSLSTNPQ) shows a compositional bias: polar residues. The segment covering 950–979 (SGAAAARSTGTATTANGNSSNSNISIGGST) has biased composition (low complexity). Residues 980 to 996 (QTLSGHSNTTTYSSSTL) show a composition bias toward polar residues.

Belongs to the FHIP family.

This chain is FHIP family protein GL19323, found in Drosophila persimilis (Fruit fly).